A 1074-amino-acid chain; its full sequence is Transmembrane protein 132E (1074 aa).

The N-terminal stretch at 1–23 is a signal peptide; the sequence is MAPGMSGRRGAALLCLSVLLAHA. Over 26–894 the chain is Extracellular; that stretch reads RSHPASPSPP…LTDLEIGMYA (869 aa). Asn-70 and Asn-91 each carry an N-linked (GlcNAc...) asparagine glycan. Disordered regions lie at residues 205–224 and 243–266; these read PAAP…PEAA and GGCG…ESPT. The span at 247 to 262 shows a compositional bias: low complexity; that stretch reads SARRGPGPGPGAAARA. Residues Asn-320 and Asn-401 are each glycosylated (N-linked (GlcNAc...) asparagine). 2 disordered regions span residues 564 to 587 and 816 to 867; these read RRSA…ANRG and GRDE…PVPP. Residues 843-854 show a composition bias toward low complexity; it reads GAGPPGTAIPAG. Residues 895-915 traverse the membrane as a helical segment; it reads LLGVFCLAILVFLINCIVFVL. Residues 916 to 1074 lie on the Cytoplasmic side of the membrane; that stretch reads RYRHKRIPPE…NYMRRIKDIA (159 aa). Residues 962 to 1064 are disordered; it reads VPACCHGDHH…TRPTPPPDLH (103 aa). Composition is skewed to low complexity over residues 973 to 985 and 1016 to 1026; these read SGSS…SQVH and FTTFTTLPTEE. Residues 1035–1044 are compositionally biased toward acidic residues; that stretch reads GEEEDEEEDL.

Belongs to the TMEM132 family. As to expression, widely expressed, with highest levels in the cochlea. In the cochlea, detected in spiral ganglion, the organ of Corti and stria vascularis. In the organ of Corti, prominently expressed in the outer and inner hair cells, especially at the apical and basal region of the outer hair cell body (at protein level).

The protein resides in the membrane. Its function is as follows. Required for normal inner ear hair cell function and hearing. The protein is Transmembrane protein 132E (Tmem132e) of Mus musculus (Mouse).